The chain runs to 116 residues: Large ribosomal subunit protein bL19 (116 aa).

This sequence belongs to the bacterial ribosomal protein bL19 family.

Its function is as follows. This protein is located at the 30S-50S ribosomal subunit interface and may play a role in the structure and function of the aminoacyl-tRNA binding site. The protein is Large ribosomal subunit protein bL19 of Mycoplasma mobile (strain ATCC 43663 / 163K / NCTC 11711) (Mesomycoplasma mobile).